A 264-amino-acid polypeptide reads, in one-letter code: Thymidylate synthase (264 aa).

Arginine 21 contributes to the dUMP binding site. Residue histidine 51 coordinates (6R)-5,10-methylene-5,6,7,8-tetrahydrofolate. Cysteine 146 functions as the Nucleophile in the catalytic mechanism. DUMP contacts are provided by residues 166–169, asparagine 177, and 207–209; these read RSAD and HIY. Aspartate 169 provides a ligand contact to (6R)-5,10-methylene-5,6,7,8-tetrahydrofolate. Alanine 263 is a binding site for (6R)-5,10-methylene-5,6,7,8-tetrahydrofolate.

It belongs to the thymidylate synthase family. Bacterial-type ThyA subfamily. Homodimer.

Its subcellular location is the cytoplasm. The catalysed reaction is dUMP + (6R)-5,10-methylene-5,6,7,8-tetrahydrofolate = 7,8-dihydrofolate + dTMP. It participates in pyrimidine metabolism; dTTP biosynthesis. Functionally, catalyzes the reductive methylation of 2'-deoxyuridine-5'-monophosphate (dUMP) to 2'-deoxythymidine-5'-monophosphate (dTMP) while utilizing 5,10-methylenetetrahydrofolate (mTHF) as the methyl donor and reductant in the reaction, yielding dihydrofolate (DHF) as a by-product. This enzymatic reaction provides an intracellular de novo source of dTMP, an essential precursor for DNA biosynthesis. The polypeptide is Thymidylate synthase (Brucella canis (strain ATCC 23365 / NCTC 10854 / RM-666)).